The primary structure comprises 144 residues: Putative pre-16S rRNA nuclease (144 aa).

Belongs to the YqgF nuclease family.

Its subcellular location is the cytoplasm. Functionally, could be a nuclease involved in processing of the 5'-end of pre-16S rRNA. This chain is Putative pre-16S rRNA nuclease, found in Mycoplasma mobile (strain ATCC 43663 / 163K / NCTC 11711) (Mesomycoplasma mobile).